A 401-amino-acid chain; its full sequence is Argininosuccinate synthase (401 aa).

ATP-binding positions include 10–18 (AYSGGVDTS) and Ala38. Position 89 (Tyr89) interacts with L-citrulline. Gly119 is an ATP binding site. Positions 121, 125, and 126 each coordinate L-aspartate. An L-citrulline-binding site is contributed by Asn125. L-citrulline contacts are provided by Arg129, Ser177, Ser186, Glu262, and Tyr274.

The protein belongs to the argininosuccinate synthase family. Type 1 subfamily. As to quaternary structure, homotetramer.

The protein resides in the cytoplasm. The catalysed reaction is L-citrulline + L-aspartate + ATP = 2-(N(omega)-L-arginino)succinate + AMP + diphosphate + H(+). The protein operates within amino-acid biosynthesis; L-arginine biosynthesis; L-arginine from L-ornithine and carbamoyl phosphate: step 2/3. The chain is Argininosuccinate synthase from Prochlorococcus marinus (strain MIT 9313).